The sequence spans 194 residues: MIARLSGILVEKTPPQVVIDCHGVGYECEVPMSTFYNLPATGEKVVLLTQFIVREDAQLLYGFGSDQERATFRQLLKVNGVGAKSALAILSGLSVDDLAQAVALQETGLLIKVPGIGKKTAERLLLELKDKFAIDGGTALAGSNPAKSASSDVLNALLALGYNEREALAAVKQLPADIAVAEGIKLSLKSLSKT.

The interval 1–64 (MIARLSGILV…EDAQLLYGFG (64 aa)) is domain I. The tract at residues 65-141 (SDQERATFRQ…FAIDGGTALA (77 aa)) is domain II. Positions 141-144 (AGSN) are flexible linker. The domain III stretch occupies residues 145-194 (PAKSASSDVLNALLALGYNEREALAAVKQLPADIAVAEGIKLSLKSLSKT).

This sequence belongs to the RuvA family. In terms of assembly, homotetramer. Forms an RuvA(8)-RuvB(12)-Holliday junction (HJ) complex. HJ DNA is sandwiched between 2 RuvA tetramers; dsDNA enters through RuvA and exits via RuvB. An RuvB hexamer assembles on each DNA strand where it exits the tetramer. Each RuvB hexamer is contacted by two RuvA subunits (via domain III) on 2 adjacent RuvB subunits; this complex drives branch migration. In the full resolvosome a probable DNA-RuvA(4)-RuvB(12)-RuvC(2) complex forms which resolves the HJ.

It localises to the cytoplasm. Functionally, the RuvA-RuvB-RuvC complex processes Holliday junction (HJ) DNA during genetic recombination and DNA repair, while the RuvA-RuvB complex plays an important role in the rescue of blocked DNA replication forks via replication fork reversal (RFR). RuvA specifically binds to HJ cruciform DNA, conferring on it an open structure. The RuvB hexamer acts as an ATP-dependent pump, pulling dsDNA into and through the RuvAB complex. HJ branch migration allows RuvC to scan DNA until it finds its consensus sequence, where it cleaves and resolves the cruciform DNA. The sequence is that of Holliday junction branch migration complex subunit RuvA from Methylobacillus flagellatus (strain ATCC 51484 / DSM 6875 / VKM B-1610 / KT).